The chain runs to 203 residues: CASP-like protein 5A2 (203 aa).

Residues 1–63 (MRASRPVVHP…KDPPGAPGTP (63 aa)) are Cytoplasmic-facing. The disordered stretch occupies residues 39–58 (AAHGGENAQPRGVRMKDPPG). The helical transmembrane segment at 64–84 (GGLGLRLVQAFFAAAALAVMA) threads the bilayer. At 85-94 (STDDFPSVSA) the chain is on the extracellular side. The helical transmembrane segment at 95–115 (FCYLVAAAILQCLWSLSLAVV) threads the bilayer. At 116-139 (DIYALLVKRSLRNPQAVCIFTIGD) the chain is on the cytoplasmic side. A helical transmembrane segment spans residues 140-160 (GITGTLTLGAACASAGITVLI). Over 161–177 (GNDLNICANNHCASFET) the chain is Extracellular. A helical membrane pass occupies residues 178–198 (ATAMAFISWFALAPSCVLNFW). Over 199–203 (SMASR) the chain is Cytoplasmic.

This sequence belongs to the Casparian strip membrane proteins (CASP) family. In terms of assembly, homodimer and heterodimers.

The protein localises to the cell membrane. This chain is CASP-like protein 5A2, found in Oryza sativa subsp. indica (Rice).